The chain runs to 367 residues: tRNA pseudouridine synthase D (367 aa).

The Nucleophile role is filled by D80. A TRUD domain is found at 156–316 (GIPNWFGEQR…LKQERRALRL (161 aa)).

It belongs to the pseudouridine synthase TruD family.

It catalyses the reaction uridine(13) in tRNA = pseudouridine(13) in tRNA. In terms of biological role, responsible for synthesis of pseudouridine from uracil-13 in transfer RNAs. The sequence is that of tRNA pseudouridine synthase D from Xanthomonas campestris pv. campestris (strain 8004).